We begin with the raw amino-acid sequence, 231 residues long: Claudin-10 (231 aa).

The chain crosses the membrane as a helical span at residues 1-21 (MASTALEIVAFVVSISGWVLV). At 22-80 (SSTLPTDYWKVSTIDGTVITTATYFANLWKICVTDSTGVANCKEFPSMLALDGYIQACR) the chain is on the extracellular side. Residues 81–101 (GLMIAAVSLGFFGSIFALFGM) traverse the membrane as a helical segment. At 102–115 (KCTKVGGSDQAKAK) the chain is on the cytoplasmic side. Residues 116–136 (IACLAGIVFILSGLCSMTGCS) form a helical membrane-spanning segment. Residues 137–160 (LYANKITTEFFDPLYMEQKYELGA) lie on the Extracellular side of the membrane. Residues 161–181 (ALFIGWAGASLCIIGGVIFCF) form a helical membrane-spanning segment. The Cytoplasmic portion of the chain corresponds to 182 to 231 (SISDNNKTPRMGYTYNGPTSAMSSRTKYQGGEGDFKTTGPSKQFDKNAYV).

It belongs to the claudin family. Can form homodimers both in trans (interaction between CLDN10 molecules in opposing membranes) and in cis (interaction between CLDN10 molecules within one membrane). Interacts with CLDN19. As to expression, widely expressed, with highest expression detected in brain cortex, kidney and lung. In kidney, the expression is highest in medulla, with transcripts being detected in medullary thick ascending limb of Henle's loop (mTAL) and outer and inner medullary collecting ducts. Expressed in salivary glands and skin. In terms of tissue distribution, detected in kidney with transcripts being detected in PCT, mTAL and cortical collecting duct. Detected in uterus. Expressed in proximal tubules (at protein level). Only detected in kidney and uterus. As to expression, detected in kidney with transcripts being detected in PCT, mTAL and cortical collecting duct. Detected in uterus. In terms of tissue distribution, expressed in the inner ear where it is detected in organ of Corti, marginal cells of stria vascularis, Reissner's membrane and spiral limbus (at protein level).

It localises to the cell junction. The protein localises to the tight junction. The protein resides in the cell membrane. Its subcellular location is the endoplasmic reticulum. The enzyme catalyses Na(+)(in) = Na(+)(out). It catalyses the reaction Li(+)(in) = Li(+)(out). The catalysed reaction is K(+)(in) = K(+)(out). It carries out the reaction Rb(+)(in) = Rb(+)(out). The enzyme catalyses Cs(+)(in) = Cs(+)(out). It catalyses the reaction NH4(+)(in) = NH4(+)(out). The catalysed reaction is methylamine(out) = methylamine(in). It carries out the reaction Mg(2+)(in) = Mg(2+)(out). The enzyme catalyses Ca(2+)(in) = Ca(2+)(out). It catalyses the reaction Sr(2+)(in) = Sr(2+)(out). The catalysed reaction is chloride(in) = chloride(out). It carries out the reaction nitrate(in) = nitrate(out). Its function is as follows. Forms paracellular channels: polymerizes in tight junction strands with cation- and anion-selective channels through the strands, conveying epithelial permeability in a process known as paracellular tight junction permeability. Functionally, forms cation-selective paracellular channels. In sweat glands and in the thick ascending limb (TAL) of Henle's loop in kidney, it controls paracellular sodium permeability which is essential for proper sweat production and renal function. In terms of biological role, forms anion-selective paracellular channels. In renal proximal tubules, it conveys selective chloride over hydrogencarbonate anion permeability which is required for renal chloride reabsorption and salt homeostasis. This Mus musculus (Mouse) protein is Claudin-10.